We begin with the raw amino-acid sequence, 1124 residues long: Tyrosine-protein kinase JAK3 (1124 aa).

An interaction with cytokine/interferon/growth hormone receptors region spans residues 1-223 (MAPPSEETPL…RRTVRRALRR (223 aa)). Serine 17 is subject to Phosphoserine. The FERM domain occupies 24 to 356 (GALHVLLPAR…GYFRLTTDSQ (333 aa)). The SH2; atypical domain occupies 375–475 (QCHGPITLDF…GVAVTLTSCC (101 aa)). A Protein kinase 1 domain is found at 521 to 781 (LEWHENLGHG…AVIRDLNSLI (261 aa)). Tyrosine 785 bears the Phosphotyrosine; by autocatalysis mark. In terms of domain architecture, Protein kinase 2 spans 822–1111 (LKYISQLGKG…SRGCETHAFT (290 aa)). ATP contacts are provided by residues 828–836 (LGKGNFGSV) and lysine 855. 2 positions are modified to phosphotyrosine: tyrosine 904 and tyrosine 939. Aspartate 949 serves as the catalytic Proton acceptor. Tyrosine 980 and tyrosine 981 each carry phosphotyrosine; by autocatalysis.

Belongs to the protein kinase superfamily. Tyr protein kinase family. JAK subfamily. In terms of assembly, interacts with STAM2 and MYO18A. Interacts with SHB. Interacts with CD69. Post-translationally, tyrosine phosphorylated in response to IL-2 and IL-4. Dephosphorylation of Tyr-980 and Tyr-981 by PTPN2 negatively regulates cytokine-mediated signaling. As to expression, in NK cells and an NK-like cell line but not in resting T-cells or in other tissues. The S-form is more commonly seen in hematopoietic lines, whereas the B-form is detected in cells both of hematopoietic and epithelial origins.

Its subcellular location is the endomembrane system. It is found in the cytoplasm. It carries out the reaction L-tyrosyl-[protein] + ATP = O-phospho-L-tyrosyl-[protein] + ADP + H(+). Its function is as follows. Non-receptor tyrosine kinase involved in various processes such as cell growth, development, or differentiation. Mediates essential signaling events in both innate and adaptive immunity and plays a crucial role in hematopoiesis during T-cells development. In the cytoplasm, plays a pivotal role in signal transduction via its association with type I receptors sharing the common subunit gamma such as IL2R, IL4R, IL7R, IL9R, IL15R and IL21R. Following ligand binding to cell surface receptors, phosphorylates specific tyrosine residues on the cytoplasmic tails of the receptor, creating docking sites for STATs proteins. Subsequently, phosphorylates the STATs proteins once they are recruited to the receptor. Phosphorylated STATs then form homodimer or heterodimers and translocate to the nucleus to activate gene transcription. For example, upon IL2R activation by IL2, JAK1 and JAK3 molecules bind to IL2R beta (IL2RB) and gamma chain (IL2RG) subunits inducing the tyrosine phosphorylation of both receptor subunits on their cytoplasmic domain. Then, STAT5A and STAT5B are recruited, phosphorylated and activated by JAK1 and JAK3. Once activated, dimerized STAT5 translocates to the nucleus and promotes the transcription of specific target genes in a cytokine-specific fashion. This is Tyrosine-protein kinase JAK3 from Homo sapiens (Human).